A 126-amino-acid chain; its full sequence is Large ribosomal subunit protein bL17 (126 aa).

This sequence belongs to the bacterial ribosomal protein bL17 family. Part of the 50S ribosomal subunit. Contacts protein L32.

This chain is Large ribosomal subunit protein bL17, found in Nitrosococcus oceani (strain ATCC 19707 / BCRC 17464 / JCM 30415 / NCIMB 11848 / C-107).